We begin with the raw amino-acid sequence, 26 residues long: Potassium channel toxin alpha-KTx6 OcyKTx1 (26 aa).

Residues Cys-3 and Cys-24 are joined by a disulfide bond.

Belongs to the short scorpion toxin superfamily. Potassium channel inhibitor family. Alpha-KTx 06 subfamily. As to expression, expressed by the venom gland.

It is found in the secreted. Its function is as follows. Blocks voltage-gated potassium channels. The protein is Potassium channel toxin alpha-KTx6 OcyKTx1 of Opisthacanthus cayaporum (South American scorpion).